A 240-amino-acid chain; its full sequence is MKTNFLVFITFTILISLGFWQLSRLKEKKLFLASMQANLTSPAINLAEIQDGLPYHKVKITGQFLPNKDIYLYGRRSMSSEKDGYYLVTPFKTIEDKVILVARGWFSNRNKNIITQATNDRQHEIIGVTMPSEKTRIYLPANDIKNNVWLTLNLKETSKVLGLDLENFYIIAEGKDISNLDILLPLAINHLAAIRNDHLEYALTWFGLAISLIVIYVIYRRRYMAVDVIPRACSGIQKNN.

The next 2 helical transmembrane spans lie at valine 7 to serine 23 and tyrosine 201 to tyrosine 219.

This sequence belongs to the SURF1 family.

The protein resides in the cell membrane. The protein is SURF1-like protein of Rickettsia conorii (strain ATCC VR-613 / Malish 7).